The primary structure comprises 276 residues: Pantothenate synthetase (276 aa).

26–33 (MGFLHEGH) contacts ATP. The active-site Proton donor is His33. Gln57 contacts (R)-pantoate. Gln57 contributes to the beta-alanine binding site. 142 to 145 (GLKD) contacts ATP. Gln148 provides a ligand contact to (R)-pantoate. Residues Ile171 and 179–182 (KSSR) contribute to the ATP site.

The protein belongs to the pantothenate synthetase family. As to quaternary structure, homodimer.

It is found in the cytoplasm. The catalysed reaction is (R)-pantoate + beta-alanine + ATP = (R)-pantothenate + AMP + diphosphate + H(+). Its pathway is cofactor biosynthesis; (R)-pantothenate biosynthesis; (R)-pantothenate from (R)-pantoate and beta-alanine: step 1/1. Its function is as follows. Catalyzes the condensation of pantoate with beta-alanine in an ATP-dependent reaction via a pantoyl-adenylate intermediate. In Exiguobacterium sibiricum (strain DSM 17290 / CCUG 55495 / CIP 109462 / JCM 13490 / 255-15), this protein is Pantothenate synthetase.